The sequence spans 177 residues: MLRRLVQQWGVAVFLLSYSVPSCGRSVEELGRRLKRAVSEHQLLHDKGKSIQDLRRRFFLHHLIAEIHTAEIRATSEVSPNSKPAPNTKNHPVRFGSDDEGRYLTQETNKVETYKEQPLKTPGKKKKGKPGKRKEQEKKKRRTRSAWLNSGVAESGLEGDHPYDISATSLELNLRRH.

A signal peptide spans 1 to 24; that stretch reads MLRRLVQQWGVAVFLLSYSVPSCG. The propeptide occupies 25–34; that stretch reads RSVEELGRRL. The segment at 57 to 68 is important for receptor binding; it reads RFFLHHLIAEIH. Residues 74 to 177 are disordered; the sequence is ATSEVSPNSK…TSLELNLRRH (104 aa). Residues 76 to 90 show a composition bias toward polar residues; the sequence is SEVSPNSKPAPNTKN. Residues 108–129 carry the Nuclear localization signal motif; the sequence is TNKVETYKEQPLKTPGKKKKGK. Positions 109–118 are enriched in basic and acidic residues; it reads NKVETYKEQP. A compositionally biased stretch (basic residues) spans 122-132; it reads PGKKKKGKPGK.

This sequence belongs to the parathyroid hormone family. As to quaternary structure, PTHrP interacts with PTH1R (via N-terminal extracellular domain). Post-translationally, there are several secretory forms, including osteostatin, arising from endoproteolytic cleavage of the initial translation product. Each of these secretory forms is believed to have one or more of its own receptors that mediates the normal paracrine, autocrine and endocrine actions.

The protein localises to the secreted. The protein resides in the cytoplasm. It is found in the nucleus. Its function is as follows. Neuroendocrine peptide which is a critical regulator of cellular and organ growth, development, migration, differentiation and survival and of epithelial calcium ion transport. Acts by binding to its receptor, PTH1R, activating G protein-coupled receptor signaling. Regulates endochondral bone development and epithelial-mesenchymal interactions during the formation of the mammary glands and teeth. Required for skeletal homeostasis. Promotes mammary mesenchyme differentiation and bud outgrowth by modulating mesenchymal cell responsiveness to BMPs. Up-regulates BMPR1A expression in the mammary mesenchyme and this increases the sensitivity of these cells to BMPs and allows them to respond to BMP4 in a paracrine and/or autocrine fashion. BMP4 signaling in the mesenchyme, in turn, triggers epithelial outgrowth and augments MSX2 expression, which causes the mammary mesenchyme to inhibit hair follicle formation within the nipple sheath. Potent inhibitor of osteoclastic bone resorption. In Canis lupus familiaris (Dog), this protein is Parathyroid hormone-related protein (PTHLH).